A 713-amino-acid polypeptide reads, in one-letter code: Constitutive lysine decarboxylase (713 aa).

Position 367 is an N6-(pyridoxal phosphate)lysine (Lys367).

The protein belongs to the Orn/Lys/Arg decarboxylase class-I family. Homodecamer; built of five dimers associated in a 5-fold symmetrical double-ring. The cofactor is pyridoxal 5'-phosphate.

It carries out the reaction L-lysine + H(+) = cadaverine + CO2. Functionally, plays a role in lysine utilization by acting as a lysine decarboxylase. The protein is Constitutive lysine decarboxylase (ldcC) of Escherichia coli (strain K12).